Consider the following 244-residue polypeptide: MTAYLLHDELIFPHPEYADPDGLLAIGGDLSPDRLILAYKSGIFPWYNHKPILWWSPSKRPLIFPRLFKMSRSLYQTLKKDIYRVSFDKDFVTVIKGCATAPRKDSTGTWITEEMIEAYTLLHKLGFAHSVEVWFNDKIVGGLYGISIGRAFFGESMFTLMKDASKVAISCLVEHLILNNFYFIDCQITNKHLIRLGAYEIPRSVFLILLKEAVQKETLTNKWDRDFEFTSKTAKFLKEKLIPR.

This sequence belongs to the L/F-transferase family.

It is found in the cytoplasm. The catalysed reaction is N-terminal L-lysyl-[protein] + L-leucyl-tRNA(Leu) = N-terminal L-leucyl-L-lysyl-[protein] + tRNA(Leu) + H(+). It carries out the reaction N-terminal L-arginyl-[protein] + L-leucyl-tRNA(Leu) = N-terminal L-leucyl-L-arginyl-[protein] + tRNA(Leu) + H(+). The enzyme catalyses L-phenylalanyl-tRNA(Phe) + an N-terminal L-alpha-aminoacyl-[protein] = an N-terminal L-phenylalanyl-L-alpha-aminoacyl-[protein] + tRNA(Phe). Its function is as follows. Functions in the N-end rule pathway of protein degradation where it conjugates Leu, Phe and, less efficiently, Met from aminoacyl-tRNAs to the N-termini of proteins containing an N-terminal arginine or lysine. This chain is Leucyl/phenylalanyl-tRNA--protein transferase, found in Thermodesulfovibrio yellowstonii (strain ATCC 51303 / DSM 11347 / YP87).